A 172-amino-acid chain; its full sequence is S-ribosylhomocysteine lyase (172 aa).

The Fe cation site is built by histidine 54, histidine 58, and cysteine 128.

This sequence belongs to the LuxS family. In terms of assembly, homodimer. Fe cation is required as a cofactor.

It carries out the reaction S-(5-deoxy-D-ribos-5-yl)-L-homocysteine = (S)-4,5-dihydroxypentane-2,3-dione + L-homocysteine. Involved in the synthesis of autoinducer 2 (AI-2) which is secreted by bacteria and is used to communicate both the cell density and the metabolic potential of the environment. The regulation of gene expression in response to changes in cell density is called quorum sensing. Catalyzes the transformation of S-ribosylhomocysteine (RHC) to homocysteine (HC) and 4,5-dihydroxy-2,3-pentadione (DPD). The sequence is that of S-ribosylhomocysteine lyase from Aliivibrio salmonicida (strain LFI1238) (Vibrio salmonicida (strain LFI1238)).